Consider the following 432-residue polypeptide: Alkaline protease secretion protein AprE (432 aa).

At 1 to 14 (MTRTVKRDENAYAR) the chain is on the cytoplasmic side. Residues 15–36 (LGWLLVLFGFGGALLWAAFAPL) traverse the membrane as a helical segment. The Periplasmic segment spans residues 37-432 (DQGVAVPATV…DRAHVALAEN (396 aa)).

Belongs to the membrane fusion protein (MFP) (TC 8.A.1) family.

It localises to the cell inner membrane. Involved in the secretion of alkaline protease. This chain is Alkaline protease secretion protein AprE (aprE), found in Pseudomonas aeruginosa (strain ATCC 15692 / DSM 22644 / CIP 104116 / JCM 14847 / LMG 12228 / 1C / PRS 101 / PAO1).